Reading from the N-terminus, the 397-residue chain is Probable tRNA sulfurtransferase (397 aa).

A THUMP domain is found at 60-165; it reads HPVIEKLQEV…KEGTYITAYD (106 aa). Residues 183 to 184, 208 to 209, R265, G287, and Q296 each bind ATP; these read ML and HF.

Belongs to the ThiI family.

The protein resides in the cytoplasm. The enzyme catalyses [ThiI sulfur-carrier protein]-S-sulfanyl-L-cysteine + a uridine in tRNA + 2 reduced [2Fe-2S]-[ferredoxin] + ATP + H(+) = [ThiI sulfur-carrier protein]-L-cysteine + a 4-thiouridine in tRNA + 2 oxidized [2Fe-2S]-[ferredoxin] + AMP + diphosphate. The catalysed reaction is [ThiS sulfur-carrier protein]-C-terminal Gly-Gly-AMP + S-sulfanyl-L-cysteinyl-[cysteine desulfurase] + AH2 = [ThiS sulfur-carrier protein]-C-terminal-Gly-aminoethanethioate + L-cysteinyl-[cysteine desulfurase] + A + AMP + 2 H(+). It functions in the pathway cofactor biosynthesis; thiamine diphosphate biosynthesis. In terms of biological role, catalyzes the ATP-dependent transfer of a sulfur to tRNA to produce 4-thiouridine in position 8 of tRNAs, which functions as a near-UV photosensor. Also catalyzes the transfer of sulfur to the sulfur carrier protein ThiS, forming ThiS-thiocarboxylate. This is a step in the synthesis of thiazole, in the thiamine biosynthesis pathway. The sulfur is donated as persulfide by IscS. The polypeptide is Probable tRNA sulfurtransferase (Anoxybacillus flavithermus (strain DSM 21510 / WK1)).